Here is a 61-residue protein sequence, read N- to C-terminus: Putative antitoxin APE_0472b.1 (61 aa).

Belongs to the UPF0165 family.

In terms of biological role, possibly the antitoxin component of a type II toxin-antitoxin (TA) system. This is Putative antitoxin APE_0472b.1 from Aeropyrum pernix (strain ATCC 700893 / DSM 11879 / JCM 9820 / NBRC 100138 / K1).